The primary structure comprises 244 residues: Small ribosomal subunit protein uS3 (244 aa).

One can recognise a KH type-2 domain in the interval 39–107 (VREMLRKKLA…PAHINVTEVR (69 aa)). Residues 213–244 (VGQEKQDDSPRNDRNDRGDRGDRPSRPAREAR) are disordered. Basic and acidic residues predominate over residues 216–244 (EKQDDSPRNDRNDRGDRGDRPSRPAREAR).

It belongs to the universal ribosomal protein uS3 family. As to quaternary structure, part of the 30S ribosomal subunit. Forms a tight complex with proteins S10 and S14.

Binds the lower part of the 30S subunit head. Binds mRNA in the 70S ribosome, positioning it for translation. This chain is Small ribosomal subunit protein uS3, found in Xanthomonas axonopodis pv. citri (strain 306).